The primary structure comprises 1028 residues: Beta-galactosidase (1028 aa).

Substrate is bound by residues Asn104 and Asp203. Asp203 provides a ligand contact to Na(+). Residues Glu418, His420, and Glu463 each coordinate Mg(2+). Residues Glu463 and 539–542 (EYAH) each bind substrate. Glu463 acts as the Proton donor in catalysis. The active-site Nucleophile is the Glu539. Position 599 (Asn599) interacts with Mg(2+). Na(+)-binding residues include Phe603 and Asn606. Positions 606 and 1003 each coordinate substrate.

The protein belongs to the glycosyl hydrolase 2 family. Homotetramer. Mg(2+) is required as a cofactor. The cofactor is Na(+).

It carries out the reaction Hydrolysis of terminal non-reducing beta-D-galactose residues in beta-D-galactosides.. This Enterobacter cloacae protein is Beta-galactosidase.